The following is a 352-amino-acid chain: N-acetyl-gamma-glutamyl-phosphate reductase (352 aa).

Cys-155 is a catalytic residue.

Belongs to the NAGSA dehydrogenase family. Type 1 subfamily.

The protein resides in the cytoplasm. The catalysed reaction is N-acetyl-L-glutamate 5-semialdehyde + phosphate + NADP(+) = N-acetyl-L-glutamyl 5-phosphate + NADPH + H(+). It functions in the pathway amino-acid biosynthesis; L-arginine biosynthesis; N(2)-acetyl-L-ornithine from L-glutamate: step 3/4. In terms of biological role, catalyzes the NADPH-dependent reduction of N-acetyl-5-glutamyl phosphate to yield N-acetyl-L-glutamate 5-semialdehyde. The protein is N-acetyl-gamma-glutamyl-phosphate reductase of Gloeothece citriformis (strain PCC 7424) (Cyanothece sp. (strain PCC 7424)).